A 211-amino-acid chain; its full sequence is NADH-quinone oxidoreductase subunit I (211 aa).

Positions 1 to 27 (MANTDRPALPHKRAVPPSRADSGPRRR) are disordered. 2 4Fe-4S ferredoxin-type domains span residues 71-101 (LNRY…VEGA) and 117-146 (RVYQ…MTYD). Cysteine 81, cysteine 84, cysteine 87, cysteine 91, cysteine 126, cysteine 129, cysteine 132, and cysteine 136 together coordinate [4Fe-4S] cluster.

This sequence belongs to the complex I 23 kDa subunit family. NDH-1 is composed of 14 different subunits. Subunits NuoA, H, J, K, L, M, N constitute the membrane sector of the complex. [4Fe-4S] cluster is required as a cofactor.

Its subcellular location is the cell membrane. It carries out the reaction a quinone + NADH + 5 H(+)(in) = a quinol + NAD(+) + 4 H(+)(out). In terms of biological role, NDH-1 shuttles electrons from NADH, via FMN and iron-sulfur (Fe-S) centers, to quinones in the respiratory chain. The immediate electron acceptor for the enzyme in this species is believed to be menaquinone. Couples the redox reaction to proton translocation (for every two electrons transferred, four hydrogen ions are translocated across the cytoplasmic membrane), and thus conserves the redox energy in a proton gradient. The sequence is that of NADH-quinone oxidoreductase subunit I from Mycobacterium tuberculosis (strain ATCC 25177 / H37Ra).